Reading from the N-terminus, the 485-residue chain is MSVWDSISFNNRFTALPRLFYTPIQPTPLNNVQWLAWNHNLANELGFPSFECTSEELLETLSGNVEPEQFSPVAMKYAGHQFGSYNPDLGDGRGLLLAQVVAKSGETFDLHLKGAGKTPYSRMGDGRAVIRSTVREYLCSEAMAGLNIPTTRALAMMTSDTPVYREKQEWGALLVRAAESHIRFGHFEHLFYTNQLAEHKLLADKVIEWHFPECLDDDKPYAAMFNQIVDRTAEMVALWQANGFAHGVMNTDNMSIIGQTFDYGPFAFLDEYDPRLICNHSDYQGRYAFNQQPRIGLWNLSALAHSLSPLVDKADLEAALEQYEPQMNGYFSQLMRRKLGLLSKHEGDSRLFESMFELMSQNKVDYPRFFRTLSNLDTLLPQDVIDLVIDREAAKLWVDNYLQRCELEESSVAERCEKMRQVNPKYILRNYLAQLAIDKAERGDSSDIDALMVVLADPYAEHPDYEHLAALPPEWGKAMEISCSS.

The ATP site is built by Gly90, Gly92, Arg93, Lys113, Asp125, Gly126, Arg176, and Arg183. Asp252 serves as the catalytic Proton acceptor. Mg(2+) contacts are provided by Asn253 and Asp262. An ATP-binding site is contributed by Asp262.

It belongs to the SELO family. It depends on Mg(2+) as a cofactor. Mn(2+) serves as cofactor.

The enzyme catalyses L-seryl-[protein] + ATP = 3-O-(5'-adenylyl)-L-seryl-[protein] + diphosphate. The catalysed reaction is L-threonyl-[protein] + ATP = 3-O-(5'-adenylyl)-L-threonyl-[protein] + diphosphate. It catalyses the reaction L-tyrosyl-[protein] + ATP = O-(5'-adenylyl)-L-tyrosyl-[protein] + diphosphate. It carries out the reaction L-histidyl-[protein] + UTP = N(tele)-(5'-uridylyl)-L-histidyl-[protein] + diphosphate. The enzyme catalyses L-seryl-[protein] + UTP = O-(5'-uridylyl)-L-seryl-[protein] + diphosphate. The catalysed reaction is L-tyrosyl-[protein] + UTP = O-(5'-uridylyl)-L-tyrosyl-[protein] + diphosphate. Its function is as follows. Nucleotidyltransferase involved in the post-translational modification of proteins. It can catalyze the addition of adenosine monophosphate (AMP) or uridine monophosphate (UMP) to a protein, resulting in modifications known as AMPylation and UMPylation. This chain is Protein nucleotidyltransferase YdiU, found in Vibrio atlanticus (strain LGP32) (Vibrio splendidus (strain Mel32)).